The chain runs to 525 residues: GMP synthase [glutamine-hydrolyzing] (525 aa).

A Glutamine amidotransferase type-1 domain is found at 13–202 (TILVLDFGSQ…AVDLCHAKQN (190 aa)). The active-site Nucleophile is the C89. Residues H176 and E178 contribute to the active site. Residues 203-400 (WTMKNFIGTE…LGISHELVWR (198 aa)) enclose the GMPS ATP-PPase domain. 231-237 (SGGVDST) contacts ATP. 4 residues coordinate XMP: R304, D462, K517, and E523.

Homodimer. Requires Mg(2+) as cofactor.

It localises to the cytoplasm. Its subcellular location is the cytosol. The catalysed reaction is XMP + L-glutamine + ATP + H2O = GMP + L-glutamate + AMP + diphosphate + 2 H(+). The protein operates within purine metabolism; GMP biosynthesis; GMP from XMP (L-Gln route): step 1/1. Functionally, catalyzes the conversion of xanthine monophosphate (XMP) to GMP in the presence of glutamine and ATP through an adenyl-XMP intermediate. The polypeptide is GMP synthase [glutamine-hydrolyzing] (GUA1) (Candida glabrata (strain ATCC 2001 / BCRC 20586 / JCM 3761 / NBRC 0622 / NRRL Y-65 / CBS 138) (Yeast)).